The chain runs to 383 residues: Probable cell wall hydrolase LytN (383 aa).

The first 49 residues, 1-49 (MFIYYCKECSIMNKQQSKVRYSIRKVSIGILSISIGMFLALGMSNKAYA), serve as a signal peptide directing secretion. The LysM domain maps to 175-219 (QIYTVKKGDTLSAIALKYKTTVSNIQNTNNIANPNLIFIGQKLKV). The 138-residue stretch at 241 to 378 (NSSTLNYLKT…NYENDMIFIR (138 aa)) folds into the Peptidase C51 domain.

It localises to the secreted. Probably involved in peptidoglycan hydrolysis. This is Probable cell wall hydrolase LytN (lytN) from Staphylococcus aureus (strain Mu50 / ATCC 700699).